Reading from the N-terminus, the 87-residue chain is Defensin-like protein 176 (87 aa).

The N-terminal stretch at 1–23 is a signal peptide; the sequence is MAKATSSLVVPIIFLVIFALVEQ. 4 disulfide bridges follow: cysteine 27-cysteine 66, cysteine 36-cysteine 55, cysteine 39-cysteine 60, and cysteine 43-cysteine 62.

Belongs to the DEFL family.

Its subcellular location is the secreted. The sequence is that of Defensin-like protein 176 (LCR65) from Arabidopsis thaliana (Mouse-ear cress).